Consider the following 250-residue polypeptide: Formylaminopyrimidine transport permease protein ThiX (250 aa).

6 helical membrane-spanning segments follow: residues 5–25 (YQAL…EISA), 62–82 (IISI…LLMF), 94–114 (LLVA…VLWF), 115–135 (GYSI…PITV), 172–192 (LPSF…GAAV), and 216–236 (PGVF…FAAI). Residues 56–237 (LPATLAIISI…LGILGFAAIK (182 aa)) form the ABC transmembrane type-1 domain.

The protein belongs to the binding-protein-dependent transport system permease family. As to quaternary structure, the complex is likely composed of an ATP-binding protein (ThiZ), a transmembrane protein (ThiX) and a solute-binding protein (ThiY).

It localises to the cell membrane. Its pathway is cofactor biosynthesis; thiamine diphosphate biosynthesis. Functionally, participates in a thiamine pyrimidine salvage pathway as part of the ABC transporter complex ThiXYZ involved in the import of thiamine degradation products such as the formylaminopyrimidine N-formyl-4-amino-5-aminomethyl-2-methylpyrimidine (FAMP). Is probably responsible for the translocation of the substrate across the membrane. The sequence is that of Formylaminopyrimidine transport permease protein ThiX from Halalkalibacterium halodurans (strain ATCC BAA-125 / DSM 18197 / FERM 7344 / JCM 9153 / C-125) (Bacillus halodurans).